Consider the following 151-residue polypeptide: uncharacterized protein (151 aa).

Positions 1–24 (MHAKTKKLGTDTSYKRPQVTAQEQ) are disordered.

This is an uncharacterized protein from Acanthamoeba polyphaga mimivirus (APMV).